We begin with the raw amino-acid sequence, 281 residues long: Transmembrane protein 163 (281 aa).

The Cytoplasmic segment spans residues 1–80 (MEPLDTELCY…HEAQNYRKKA (80 aa)). The interval 16–44 (IVQPSCNGQTPPGHRTLSPTQQMDHEQQM) is disordered. Residues 81-101 (LWVSWLSIAITLILAIAAFTV) form a helical membrane-spanning segment. Residues 102–108 (SVMRYSA) lie on the Extracellular side of the membrane. Residues 109–129 (SSFGFALDAVLDVLSSAIVLW) traverse the membrane as a helical segment. The Cytoplasmic segment spans residues 130–145 (RYSNAAAVHSAHREYM). A helical membrane pass occupies residues 146–166 (ACCILGVIFLLSSICIVSKAI). The Extracellular portion of the chain corresponds to 167 to 179 (HDLSIRVMPEVDG). Residues 180–200 (FLFSVSILSGILCSLLAAIKF) traverse the membrane as a helical segment. The Cytoplasmic portion of the chain corresponds to 201 to 209 (MLGKVLTSR). A helical membrane pass occupies residues 210-230 (ALITDGFNSLVGGIMGFSILL). The Extracellular portion of the chain corresponds to 231 to 240 (SAEVYKHNSK). The helical transmembrane segment at 241 to 261 (VWYLDGSVGILIGLIIMSYGI) threads the bilayer. The Cytoplasmic segment spans residues 262–281 (KLLMDMVPRVRQTRHYEMFE).

It belongs to the TMEM163 family.

It is found in the cytoplasmic vesicle. Its subcellular location is the secretory vesicle. The protein localises to the synaptic vesicle membrane. It localises to the early endosome membrane. Functionally, may bind zinc and other divalent cations and recruit them to vesicular organelles. In Xenopus laevis (African clawed frog), this protein is Transmembrane protein 163 (tmem163).